The following is a 251-amino-acid chain: Imidazole glycerol phosphate synthase subunit HisF (251 aa).

Active-site residues include Asp-11 and Asp-130.

It belongs to the HisA/HisF family. Heterodimer of HisH and HisF.

Its subcellular location is the cytoplasm. It carries out the reaction 5-[(5-phospho-1-deoxy-D-ribulos-1-ylimino)methylamino]-1-(5-phospho-beta-D-ribosyl)imidazole-4-carboxamide + L-glutamine = D-erythro-1-(imidazol-4-yl)glycerol 3-phosphate + 5-amino-1-(5-phospho-beta-D-ribosyl)imidazole-4-carboxamide + L-glutamate + H(+). Its pathway is amino-acid biosynthesis; L-histidine biosynthesis; L-histidine from 5-phospho-alpha-D-ribose 1-diphosphate: step 5/9. Functionally, IGPS catalyzes the conversion of PRFAR and glutamine to IGP, AICAR and glutamate. The HisF subunit catalyzes the cyclization activity that produces IGP and AICAR from PRFAR using the ammonia provided by the HisH subunit. This chain is Imidazole glycerol phosphate synthase subunit HisF, found in Streptococcus mutans serotype c (strain ATCC 700610 / UA159).